A 451-amino-acid chain; its full sequence is Enolase (451 aa).

A (2R)-2-phosphoglycerate-binding site is contributed by Q163. E205 acts as the Proton donor in catalysis. Residues D258, E308, and D335 each contribute to the Mg(2+) site. Residues K360, R389, S390, and K411 each coordinate (2R)-2-phosphoglycerate. K360 serves as the catalytic Proton acceptor.

It belongs to the enolase family. Requires Mg(2+) as cofactor.

The protein resides in the cytoplasm. Its subcellular location is the secreted. The protein localises to the cell surface. It catalyses the reaction (2R)-2-phosphoglycerate = phosphoenolpyruvate + H2O. It participates in carbohydrate degradation; glycolysis; pyruvate from D-glyceraldehyde 3-phosphate: step 4/5. Catalyzes the reversible conversion of 2-phosphoglycerate (2-PG) into phosphoenolpyruvate (PEP). It is essential for the degradation of carbohydrates via glycolysis. This is Enolase from Mycoplasma mycoides subsp. mycoides SC (strain CCUG 32753 / NCTC 10114 / PG1).